Here is a 252-residue protein sequence, read N- to C-terminus: Chitooligosaccharide deacetylase (252 aa).

The Mg(2+) site is built by His-61 and His-125.

It belongs to the YdjC deacetylase family. ChbG subfamily. In terms of assembly, homodimer. Mg(2+) is required as a cofactor.

Its subcellular location is the cytoplasm. It catalyses the reaction N,N'-diacetylchitobiose + H2O = N-acetyl-beta-D-glucosaminyl-(1-&gt;4)-D-glucosamine + acetate. The catalysed reaction is diacetylchitobiose-6'-phosphate + H2O = N'-monoacetylchitobiose-6'-phosphate + acetate. It functions in the pathway glycan degradation; chitin degradation. In terms of biological role, involved in the degradation of chitin. ChbG is essential for growth on the acetylated chitooligosaccharides chitobiose and chitotriose but is dispensable for growth on cellobiose and chitosan dimer, the deacetylated form of chitobiose. Deacetylation of chitobiose-6-P and chitotriose-6-P is necessary for both the activation of the chb promoter by the regulatory protein ChbR and the hydrolysis of phosphorylated beta-glucosides by the phospho-beta-glucosidase ChbF. Catalyzes the removal of only one acetyl group from chitobiose-6-P to yield monoacetylchitobiose-6-P, the inducer of ChbR and the substrate of ChbF. The polypeptide is Chitooligosaccharide deacetylase (Escherichia coli O127:H6 (strain E2348/69 / EPEC)).